Consider the following 323-residue polypeptide: Quinolinate synthase (323 aa).

Histidine 39 and serine 56 together coordinate iminosuccinate. Cysteine 101 contributes to the [4Fe-4S] cluster binding site. Iminosuccinate is bound by residues 127 to 129 and serine 144; that span reads YIN. Cysteine 187 contacts [4Fe-4S] cluster. Iminosuccinate is bound by residues 213–215 and threonine 230; that span reads HPE. Cysteine 280 contributes to the [4Fe-4S] cluster binding site.

Belongs to the quinolinate synthase family. Type 2 subfamily. The cofactor is [4Fe-4S] cluster.

It localises to the cytoplasm. The enzyme catalyses iminosuccinate + dihydroxyacetone phosphate = quinolinate + phosphate + 2 H2O + H(+). Its pathway is cofactor biosynthesis; NAD(+) biosynthesis; quinolinate from iminoaspartate: step 1/1. Catalyzes the condensation of iminoaspartate with dihydroxyacetone phosphate to form quinolinate. In Chlorobium phaeobacteroides (strain DSM 266 / SMG 266 / 2430), this protein is Quinolinate synthase.